We begin with the raw amino-acid sequence, 415 residues long: Thylakoid ADP,ATP carrier protein, chloroplastic (415 aa).

A chloroplast-targeting transit peptide spans 1–61 (MGEEKSLLQF…NFASLSVAIR (61 aa)). The next 5 helical transmembrane spans lie at 106-126 (IALL…AFAG), 182-207 (LPQV…KLFR), 219-239 (LGAG…LDVL), 273-293 (GPSL…FDLV), and 309-329 (LLTA…LDTI). 3 Solcar repeats span residues 113-205 (PKDA…YKKL), 213-296 (LSVL…VKKS), and 307-387 (SSLL…VKKL). Position 187 (Arg-187) interacts with ADP. Residue Arg-330 participates in ADP binding. The helical transmembrane segment at 362-388 (GFVPNALKSMPNSSIKLTTFDIVKKLI) threads the bilayer.

Belongs to the mitochondrial carrier (TC 2.A.29) family. In terms of tissue distribution, highly expressed in developing photosynthetic organs such as leaves, flower buds and green siliques. Also detected in roots, flowers, mature leaves and stems.

Its subcellular location is the plastid. The protein localises to the chloroplast thylakoid membrane. The protein resides in the chloroplast envelope. KM and Vmax values toward ATP only are increased by m-chlorocarbonyl cyanide phenylhydrazone (CCCP). The corresponding values for ADP are not affected. In terms of biological role, specifically transports adenine nucleotides. Involved in the uptake of ATP into thylakoids in exchange for lumenal ADP. The polypeptide is Thylakoid ADP,ATP carrier protein, chloroplastic (TAAC) (Arabidopsis thaliana (Mouse-ear cress)).